A 107-amino-acid chain; its full sequence is Phosphoribosyl-ATP pyrophosphatase (107 aa).

The protein belongs to the PRA-PH family.

It is found in the cytoplasm. The enzyme catalyses 1-(5-phospho-beta-D-ribosyl)-ATP + H2O = 1-(5-phospho-beta-D-ribosyl)-5'-AMP + diphosphate + H(+). It participates in amino-acid biosynthesis; L-histidine biosynthesis; L-histidine from 5-phospho-alpha-D-ribose 1-diphosphate: step 2/9. The protein is Phosphoribosyl-ATP pyrophosphatase of Bacillus cereus (strain G9842).